The primary structure comprises 488 residues: E3 ubiquitin-protein ligase RNF8 (488 aa).

Residues 38-92 form the FHA domain; it reads VTIGRGLSVTYQLISKVCPLMISRSHCVLKQNPEGQWTIMDNKSLNGVWLNRERL. The segment at 68 to 72 is required for interaction with PIWIL1; sequence QNPEG. The segment at 141 to 164 is disordered; the sequence is DQRMEKHKGSRTKRKFSSPGLENL. A compositionally biased stretch (basic residues) spans 145-156; sequence EKHKGSRTKRKF. Phosphoserine is present on S157. The segment at 406-444 adopts an RING-type zinc-finger fold; it reads CIICSEYFIEAVTLNCAHSFCSFCINEWMKRKVECPICR.

This sequence belongs to the RNF8 family. In terms of assembly, homodimer. Forms a E2-E3 ubiquitin ligase complex composed of the RNF8 homodimer and a E2 heterodimer of UBE2N and UBE2V2. Interacts with class III E2s, including UBE2E1, UBE2E2, and UBE2E3 and with UBE2N. Interacts with RXRA. Interacts (via FHA domain) with ATM-phosphorylated MDC1. Interacts (via FHA domain) with 'Thr-4829' phosphorylated HERC2 (via C-terminus). Interacts with PIWIL1; leading to sequester RNF8 in the cytoplasm. Interacts with WRAP53/TCAB1. (Microbial infection) May interact with the L.monocytogenes protein actA; however, given these errors in the sequence (AJ242721), the relevance of the interaction with actA remains to be confirmed. Post-translationally, autoubiquitinated through 'Lys-48' and 'Lys-63' of ubiquitin. 'Lys-63' polyubiquitination is mediated by UBE2N. 'Lys-29'-type polyubiquitination is also observed, but it doesn't require its own functional RING-type zinc finger.

The protein localises to the nucleus. It localises to the cytoplasm. It is found in the midbody. Its subcellular location is the chromosome. The protein resides in the telomere. It carries out the reaction S-ubiquitinyl-[E2 ubiquitin-conjugating enzyme]-L-cysteine + [acceptor protein]-L-lysine = [E2 ubiquitin-conjugating enzyme]-L-cysteine + N(6)-ubiquitinyl-[acceptor protein]-L-lysine.. It functions in the pathway protein modification; protein ubiquitination. In terms of biological role, E3 ubiquitin-protein ligase that plays a key role in DNA damage signaling via 2 distinct roles: by mediating the 'Lys-63'-linked ubiquitination of histones H2A and H2AX and promoting the recruitment of DNA repair proteins at double-strand breaks (DSBs) sites, and by catalyzing 'Lys-48'-linked ubiquitination to remove target proteins from DNA damage sites. Following DNA DSBs, it is recruited to the sites of damage by ATM-phosphorylated MDC1 and catalyzes the 'Lys-63'-linked ubiquitination of histones H2A and H2AX, thereby promoting the formation of TP53BP1 and BRCA1 ionizing radiation-induced foci (IRIF). Also controls the recruitment of UIMC1-BRCC3 (RAP80-BRCC36) and PAXIP1/PTIP to DNA damage sites. Promotes the recruitment of NBN to DNA damage sites by catalyzing 'Lys-6'-linked ubiquitination of NBN. Also recruited at DNA interstrand cross-links (ICLs) sites and catalyzes 'Lys-63'-linked ubiquitination of histones H2A and H2AX, leading to recruitment of FAAP20 and Fanconi anemia (FA) complex, followed by interstrand cross-link repair. H2A ubiquitination also mediates the ATM-dependent transcriptional silencing at regions flanking DSBs in cis, a mechanism to avoid collision between transcription and repair intermediates. Promotes the formation of 'Lys-63'-linked polyubiquitin chains via interactions with the specific ubiquitin-conjugating UBE2N/UBC13 and ubiquitinates non-histone substrates such as PCNA. Substrates that are polyubiquitinated at 'Lys-63' are usually not targeted for degradation. Also catalyzes the formation of 'Lys-48'-linked polyubiquitin chains via interaction with the ubiquitin-conjugating UBE2L6/UBCH8, leading to degradation of substrate proteins such as CHEK2, JMJD2A/KDM4A and KU80/XRCC5: it is still unclear how the preference toward 'Lys-48'- versus 'Lys-63'-linked ubiquitination is regulated but it could be due to RNF8 ability to interact with specific E2 specific ligases. For instance, interaction with phosphorylated HERC2 promotes the association between RNF8 and UBE2N/UBC13 and favors the specific formation of 'Lys-63'-linked ubiquitin chains. Promotes non-homologous end joining (NHEJ) by promoting the 'Lys-48'-linked ubiquitination and degradation the of KU80/XRCC5. Following DNA damage, mediates the ubiquitination and degradation of JMJD2A/KDM4A in collaboration with RNF168, leading to unmask H4K20me2 mark and promote the recruitment of TP53BP1 at DNA damage sites. Following DNA damage, mediates the ubiquitination and degradation of POLD4/p12, a subunit of DNA polymerase delta. In the absence of POLD4, DNA polymerase delta complex exhibits higher proofreading activity. In addition to its function in damage signaling, also plays a role in higher-order chromatin structure by mediating extensive chromatin decondensation. Involved in the activation of ATM by promoting histone H2B ubiquitination, which indirectly triggers histone H4 'Lys-16' acetylation (H4K16ac), establishing a chromatin environment that promotes efficient activation of ATM kinase. Required in the testis, where it plays a role in the replacement of histones during spermatogenesis. At uncapped telomeres, promotes the joining of deprotected chromosome ends by inducing H2A ubiquitination and TP53BP1 recruitment, suggesting that it may enhance cancer development by aggravating telomere-induced genome instability in case of telomeric crisis. Promotes the assembly of RAD51 at DNA DSBs in the absence of BRCA1 and TP53BP1 Also involved in class switch recombination in immune system, via its role in regulation of DSBs repair. May be required for proper exit from mitosis after spindle checkpoint activation and may regulate cytokinesis. May play a role in the regulation of RXRA-mediated transcriptional activity. Not involved in RXRA ubiquitination by UBE2E2. This is E3 ubiquitin-protein ligase RNF8 from Mus musculus (Mouse).